We begin with the raw amino-acid sequence, 189 residues long: HTH-type transcriptional regulator Hpr (189 aa).

The 145-residue stretch at 12–156 folds into the HTH marR-type domain; sequence ALLYSHKIVQ…ISAIVRRLYG (145 aa). The segment at residues 62 to 85 is a DNA-binding region (H-T-H motif); sequence ISEIAKYGVMHVSTAFNFSKKLED.

Homodimer.

Negative regulator of protease production and sporulation. This chain is HTH-type transcriptional regulator Hpr, found in Exiguobacterium sibiricum (strain DSM 17290 / CCUG 55495 / CIP 109462 / JCM 13490 / 255-15).